We begin with the raw amino-acid sequence, 463 residues long: L-seryl-tRNA(Sec) selenium transferase (463 aa).

Lys-295 is modified (N6-(pyridoxal phosphate)lysine).

The protein belongs to the SelA family. In terms of assembly, homodecamer; pentamer of dimers. Binds only one seryl-tRNA(Sec) per dimer. Requires pyridoxal 5'-phosphate as cofactor.

It localises to the cytoplasm. It carries out the reaction L-seryl-tRNA(Sec) + selenophosphate + H(+) = L-selenocysteinyl-tRNA(Sec) + phosphate. Its pathway is aminoacyl-tRNA biosynthesis; selenocysteinyl-tRNA(Sec) biosynthesis; selenocysteinyl-tRNA(Sec) from L-seryl-tRNA(Sec) (bacterial route): step 1/1. Converts seryl-tRNA(Sec) to selenocysteinyl-tRNA(Sec) required for selenoprotein biosynthesis. This chain is L-seryl-tRNA(Sec) selenium transferase, found in Shigella boydii serotype 4 (strain Sb227).